A 682-amino-acid polypeptide reads, in one-letter code: Penicillin-binding protein activator LpoA (682 aa).

The first 26 residues, 1–26 (MLSSITVRTKSGRLIPLVLAATLLAA), serve as a signal peptide directing secretion. The N-palmitoyl cysteine moiety is linked to residue C27. The S-diacylglycerol cysteine moiety is linked to residue C27.

It belongs to the LpoA family. Interacts with PBP1a.

It is found in the cell outer membrane. In terms of biological role, regulator of peptidoglycan synthesis that is essential for the function of penicillin-binding protein 1A (PBP1a). This chain is Penicillin-binding protein activator LpoA, found in Edwardsiella ictaluri (strain 93-146).